Reading from the N-terminus, the 325-residue chain is Malate dehydrogenase (325 aa).

11–17 provides a ligand contact to NAD(+); that stretch reads GAAGQIA. Substrate contacts are provided by Arg92 and Arg98. NAD(+)-binding positions include Asn105, Gln112, and 129–131; that span reads VGN. Residues Asn131 and Arg162 each coordinate substrate. His187 serves as the catalytic Proton acceptor.

It belongs to the LDH/MDH superfamily. MDH type 2 family.

The catalysed reaction is (S)-malate + NAD(+) = oxaloacetate + NADH + H(+). Functionally, catalyzes the reversible oxidation of malate to oxaloacetate. In Methylococcus capsulatus (strain ATCC 33009 / NCIMB 11132 / Bath), this protein is Malate dehydrogenase.